The primary structure comprises 587 residues: NADH-quinone oxidoreductase subunit C/D (587 aa).

An NADH dehydrogenase I subunit C region spans residues 1–178; the sequence is MAAPTTEHAE…EPFSLPDDVQ (178 aa). Residues 202–587 form an NADH dehydrogenase I subunit D region; it reads DFLFLNLGPN…IDFVMADVDR (386 aa).

This sequence in the N-terminal section; belongs to the complex I 30 kDa subunit family. In the C-terminal section; belongs to the complex I 49 kDa subunit family. NDH-1 is composed of 13 different subunits. Subunits NuoB, CD, E, F, and G constitute the peripheral sector of the complex.

It localises to the cell inner membrane. It carries out the reaction a quinone + NADH + 5 H(+)(in) = a quinol + NAD(+) + 4 H(+)(out). In terms of biological role, NDH-1 shuttles electrons from NADH, via FMN and iron-sulfur (Fe-S) centers, to quinones in the respiratory chain. The immediate electron acceptor for the enzyme in this species is believed to be ubiquinone. Couples the redox reaction to proton translocation (for every two electrons transferred, four hydrogen ions are translocated across the cytoplasmic membrane), and thus conserves the redox energy in a proton gradient. This Methylococcus capsulatus (strain ATCC 33009 / NCIMB 11132 / Bath) protein is NADH-quinone oxidoreductase subunit C/D.